A 380-amino-acid polypeptide reads, in one-letter code: D-alanine--D-alanine ligase (380 aa).

Residues 142-348 enclose the ATP-grasp domain; the sequence is KQVLTAHGIR…YADLIDRLIE (207 aa). ATP is bound at residue 172-227; sequence QSRLGDNVFIKPANQGSSVGIHKASNVQEYLDGVADAFRYDYKVLVEQTIDGPQEV. Residues aspartate 302, glutamate 315, and asparagine 317 each coordinate Mg(2+).

Belongs to the D-alanine--D-alanine ligase family. Requires Mg(2+) as cofactor. The cofactor is Mn(2+).

The protein resides in the cytoplasm. The catalysed reaction is 2 D-alanine + ATP = D-alanyl-D-alanine + ADP + phosphate + H(+). Its pathway is cell wall biogenesis; peptidoglycan biosynthesis. Functionally, cell wall formation. This chain is D-alanine--D-alanine ligase, found in Levilactobacillus brevis (strain ATCC 367 / BCRC 12310 / CIP 105137 / JCM 1170 / LMG 11437 / NCIMB 947 / NCTC 947) (Lactobacillus brevis).